Consider the following 366-residue polypeptide: MKIADLMTLLDHHVPFSTAESWDNVGLLIGDEDVEVTGVLTALDCTLEVVNEAIEKGYNTIISHHPLIFKGVTSLKANGYGLIIRKLIQHDINLIAMHTNLDVNPYGVNMMLAKAMGLKNISIINNQQDVYYKVQTYIPKDNVGPFKDKLSENGLAQEGNYEYCFFESEGRGQFKPVGEANPTIGQIDKIEYVDEVKIEFMIDAYQKSRAEQLIKQYHPYETPVFDFIEIKQTSLYGLGVMAEVDNQMTLEDFAADIKSKLNIPSVRFVGESNQKIKRIAIIGGSGIGYEYQAVQQGADVFVTGDIKHHDALDAKIHGVNLIDINHYSEYVMKEGLKALLMNWFNTEKINLDVEASTINTDPFQYI.

Residues His64, His65, Asp102, His326, and Glu329 each coordinate Zn(2+).

The protein belongs to the GTP cyclohydrolase I type 2/NIF3 family. In terms of assembly, homohexamer.

This Staphylococcus aureus (strain COL) protein is GTP cyclohydrolase 1 type 2 homolog.